The following is a 406-amino-acid chain: Succinylornithine transaminase (406 aa).

Lys-252 is subject to N6-(pyridoxal phosphate)lysine.

Belongs to the class-III pyridoxal-phosphate-dependent aminotransferase family. AstC subfamily. It depends on pyridoxal 5'-phosphate as a cofactor.

It carries out the reaction N(2)-succinyl-L-ornithine + 2-oxoglutarate = N-succinyl-L-glutamate 5-semialdehyde + L-glutamate. The protein operates within amino-acid degradation; L-arginine degradation via AST pathway; L-glutamate and succinate from L-arginine: step 3/5. Catalyzes the transamination of N(2)-succinylornithine and alpha-ketoglutarate into N(2)-succinylglutamate semialdehyde and glutamate. Can also act as an acetylornithine aminotransferase. This Escherichia coli O139:H28 (strain E24377A / ETEC) protein is Succinylornithine transaminase.